Here is a 67-residue protein sequence, read N- to C-terminus: Large ribosomal subunit protein bL31c (67 aa).

This sequence belongs to the bacterial ribosomal protein bL31 family. Type A subfamily. Part of the 50S ribosomal subunit.

Its subcellular location is the plastid. The protein resides in the chloroplast. Binds the 23S rRNA. The protein is Large ribosomal subunit protein bL31c (rpl31) of Cyanidioschyzon merolae (strain NIES-3377 / 10D) (Unicellular red alga).